We begin with the raw amino-acid sequence, 474 residues long: Phosphatidylserine synthase 2 (474 aa).

Residues 1-62 lie on the Lumenal side of the membrane; it reads MLRSDVRRVA…DDGTNTFFWR (62 aa). The chain crosses the membrane as a helical span at residues 63-83; sequence AHTLTVLFILTCSLGYVTLLE. The Cytoplasmic portion of the chain corresponds to 84–96; sequence ETPQDTAYNAKRG. Residues 97 to 117 form a helical membrane-spanning segment; sequence IIASILVFLCFGVTQAKDGPF. The Lumenal portion of the chain corresponds to 118–126; the sequence is SRPHPAYWR. The chain crosses the membrane as a helical span at residues 127–147; the sequence is FWLCVSVVYELFLIFILFQTV. Residues 148-313 are Cytoplasmic-facing; the sequence is HDGRQFMKFI…EWKPASSLRR (166 aa). The helical transmembrane segment at 314–334 threads the bilayer; it reads WLAVCGIIFVFLLAELNTFYL. Lys335 is a topological domain (lumenal). The helical transmembrane segment at 336–356 threads the bilayer; the sequence is FVLWMPPEHYLVLLRLVFFVN. Topologically, residues 357-376 are cytoplasmic; that stretch reads VGGVAMREIYDFMDDLKFHK. The helical transmembrane segment at 377-397 threads the bilayer; sequence KLGQQAWMVAAITVTEFLIVV. Residues 398 to 403 are Lumenal-facing; it reads KYDPYT. Residues 404 to 424 form a helical membrane-spanning segment; the sequence is ITLPLPFYVTQCWILGIVLVL. The Cytoplasmic segment spans residues 425 to 474; it reads TWTVWRFFIRDITLRYKEIRQQKQHRNEEEKSHRNGDVNSEKDTNKHKKH. Positions 448-468 are enriched in basic and acidic residues; that stretch reads QHRNEEEKSHRNGDVNSEKDT. A disordered region spans residues 448–474; sequence QHRNEEEKSHRNGDVNSEKDTNKHKKH.

Belongs to the phosphatidyl serine synthase family.

The protein resides in the endoplasmic reticulum membrane. The catalysed reaction is a 1,2-diacyl-sn-glycero-3-phosphoethanolamine + L-serine = a 1,2-diacyl-sn-glycero-3-phospho-L-serine + ethanolamine. It catalyses the reaction 1-hexadecanoyl-2-(9Z-octadecenoyl)-sn-glycero-3-phosphoethanolamine + L-serine = 1-hexadecanoyl-2-(9Z-octadecenoyl)-sn-glycero-3-phospho-L-serine + ethanolamine. The enzyme catalyses 1-hexadecanoyl-2-(4Z,7Z,10Z,13Z,16Z,19Z-docosahexaenoyl)-sn-glycero-3-phosphoethanolamine + L-serine = 1-hexadecanoyl-2-(4Z,7Z,10Z,13Z,16Z,19Z-docosahexaenoyl)-sn-glycero-3-phosphoserine + ethanolamine. It carries out the reaction 1-octadecanoyl-2-(5Z,8Z,11Z,14Z)-eicosatetraenoyl-sn-glycero-3-phosphoethanolamine + L-serine = 1-octadecanoyl-2-(5Z,8Z,11Z,14Z)-eicosatetraenoyl-sn-glycero-3-phosphoserine + ethanolamine. The catalysed reaction is 1-octadecanoyl-2-(4Z,7Z,10Z,13Z,16Z,19Z-docosahexaenoyl)-sn-glycero-3-phosphoethanolamine + L-serine = 1-octadecanoyl-2-(4Z,7Z,10Z,13Z,16Z,19Z-docosahexaenoyl)-sn-glycero-3-phosphoserine + ethanolamine. It catalyses the reaction 1-(1Z-octadecenyl)-2-(4Z,7Z,10Z,13Z,16Z,19Z-docosahexaenoyl)-sn-glycero-3-phosphoethanolamine + L-serine = 1-(1Z-octadecenyl)-2-(4Z,7Z,10Z,13Z,16Z,19Z-docosahexaenoyl)-sn-glycero-3-phospho-L-serine + ethanolamine. The enzyme catalyses 1-octadecanoyl-2-(9Z-octadecenoyl)-sn-glycero-3-phosphoethanolamine + L-serine = 1-octadecanoyl-2-(9Z-octadecenoyl)-sn-glycero-3-phospho-L-serine + ethanolamine. It carries out the reaction 1-(1Z-octadecenyl)-2-(9Z-octadecenoyl)-sn-glycero-3-phosphoethanolamine + L-serine = 1-(1Z-octadecenyl)-2-(9Z-octadecenoyl)-sn-glycero-3-phospho-L-serine + ethanolamine. The catalysed reaction is 1-(1Z-octadecenyl)-2-(5Z,8Z,11Z,14Z- eicosatetraenoyl)-sn-glycero-3-phosphoethanolamine + L-serine = 1-(1Z-octadecenyl)-2-(5Z,8Z,11Z,14Z-eicosatetraenoyl)-sn-glycero-3-phospho-L-serine + ethanolamine. It participates in phospholipid metabolism; phosphatidylserine biosynthesis. Catalyzes a base-exchange reaction in which the polar head group of phosphatidylethanolamine (PE) or phosphatidylcholine (PC) is replaced by L-serine. Catalyzes the conversion of phosphatatidylethanolamine and does not act on phosphatidylcholine. Can utilize both phosphatidylethanolamine (PE) plasmalogen and diacyl PE as substrate and the latter is six times better utilized, indicating the importance of an ester linkage at the sn-1 position. Although it shows no sn-1 fatty acyl preference, exhibits significant preference towards docosahexaenoic acid (22:6n-3) compared with 18:1 or 20:4 at the sn-2 position. This is Phosphatidylserine synthase 2 (ptdss2) from Xenopus tropicalis (Western clawed frog).